A 397-amino-acid polypeptide reads, in one-letter code: Elongation factor Tu (397 aa).

A tr-type G domain is found at 10-206; that stretch reads KPHVNIGTIG…ACDDYIPEPV (197 aa). Positions 19–26 are G1; sequence GHIDHGKT. 19 to 26 is a binding site for GTP; the sequence is GHIDHGKT. Threonine 26 serves as a coordination point for Mg(2+). Positions 62 to 66 are G2; it reads GITIS. A G3 region spans residues 83–86; the sequence is DCPG. Residues 83–87 and 138–141 contribute to the GTP site; these read DCPGH and NKAD. The tract at residues 138–141 is G4; the sequence is NKAD. Residues 176 to 178 form a G5 region; it reads SAL.

This sequence belongs to the TRAFAC class translation factor GTPase superfamily. Classic translation factor GTPase family. EF-Tu/EF-1A subfamily. As to quaternary structure, monomer.

The protein localises to the cytoplasm. It catalyses the reaction GTP + H2O = GDP + phosphate + H(+). In terms of biological role, GTP hydrolase that promotes the GTP-dependent binding of aminoacyl-tRNA to the A-site of ribosomes during protein biosynthesis. The polypeptide is Elongation factor Tu (Acidothermus cellulolyticus (strain ATCC 43068 / DSM 8971 / 11B)).